We begin with the raw amino-acid sequence, 295 residues long: Sulfotransferase 1E1 (295 aa).

3'-phosphoadenylyl sulfate is bound at residue 48-53; it reads KSGSTW. Substrate is bound at residue 106-108; that stretch reads KTH. Catalysis depends on His-108, which acts as the Proton acceptor. 2 residues coordinate 3'-phosphoadenylyl sulfate: Arg-130 and Ser-138. Position 156 is a phosphoserine (Ser-156). Residues Tyr-193, 227–232, and 257–259 contribute to the 3'-phosphoadenylyl sulfate site; these read TSFQEM and RKG.

It belongs to the sulfotransferase 1 family. Homodimer. In terms of tissue distribution, liver of young mature males and uterus.

It is found in the cytoplasm. Its subcellular location is the cytosol. It catalyses the reaction estrone + 3'-phosphoadenylyl sulfate = estrone 3-sulfate + adenosine 3',5'-bisphosphate + H(+). It carries out the reaction (24S)-hydroxycholesterol + 3'-phosphoadenylyl sulfate = (24S)-hydroxycholesterol 3-sulfate + adenosine 3',5'-bisphosphate + H(+). The catalysed reaction is 17beta-estradiol + 3'-phosphoadenylyl sulfate = 17beta-estradiol 3-sulfate + adenosine 3',5'-bisphosphate + H(+). The enzyme catalyses 3beta-hydroxyandrost-5-en-17-one + 3'-phosphoadenylyl sulfate = dehydroepiandrosterone 3-sulfate + adenosine 3',5'-bisphosphate + H(+). It catalyses the reaction 4-ethylphenol + 3'-phosphoadenylyl sulfate = 4-ethylphenyl sulfate + adenosine 3',5'-bisphosphate + H(+). With respect to regulation, inhibited by estradiol. Its function is as follows. Sulfotransferase that utilizes 3'-phospho-5'-adenylyl sulfate (PAPS) as sulfonate donor to catalyze the sulfate conjugation of estradiol and estrone. Is a key enzyme in estrogen homeostasis, the sulfation of estrogens leads to their inactivation. Also sulfates dehydroepiandrosterone (DHEA), pregnenolone, (24S)-hydroxycholesterol and xenobiotic compounds like ethinylestradiol, equalenin, diethyl stilbesterol and 1-naphthol at significantly lower efficiency. Does not sulfonate cortisol, testosterone and dopamine. May play a role in gut microbiota-host metabolic interaction. O-sulfonates 4-ethylphenol (4-EP), a dietary tyrosine-derived metabolite produced by gut bacteria. The product 4-EPS crosses the blood-brain barrier and may negatively regulate oligodendrocyte maturation and myelination, affecting the functional connectivity of different brain regions associated with the limbic system. This Rattus norvegicus (Rat) protein is Sulfotransferase 1E1.